A 259-amino-acid chain; its full sequence is Polycomb group RING finger protein 1 (259 aa).

An RING-type zinc finger spans residues 45-84; that stretch reads CYLCAGYFIDATTITECLHTFCKSCIVKYLQTSKYCPLCN.

As to quaternary structure, component of a PRC1-like complex.

It is found in the nucleus. Functionally, component of a Polycomb group (PcG) multiprotein PRC1-like complex, a complex class required to maintain the transcriptionally repressive state of many genes, including Hox genes, throughout development. PcG PRC1 complex acts via chromatin remodeling and modification of histones; it mediates monoubiquitination of histone H2A 'Lys-119', rendering chromatin heritably changed in its expressibility. In Xenopus tropicalis (Western clawed frog), this protein is Polycomb group RING finger protein 1 (pcgf1).